A 1167-amino-acid chain; its full sequence is ATP-dependent helicase/deoxyribonuclease subunit B (1167 aa).

The UvrD-like helicase ATP-binding domain occupies 1–359; that stretch reads MSLRFLLGRS…IRQTEAYRDL (359 aa). 8 to 15 provides a ligand contact to ATP; that stretch reads GRSGSGKT. In terms of domain architecture, UvrD-like helicase C-terminal spans 282–588; the sequence is VNRRHQDKAL…EFALVPPAID (307 aa). Residues cysteine 803, cysteine 1125, cysteine 1128, and cysteine 1134 each contribute to the [4Fe-4S] cluster site.

This sequence belongs to the helicase family. AddB/RexB type 1 subfamily. In terms of assembly, heterodimer of AddA and AddB. Mg(2+) is required as a cofactor. It depends on [4Fe-4S] cluster as a cofactor.

Functionally, the heterodimer acts as both an ATP-dependent DNA helicase and an ATP-dependent, dual-direction single-stranded exonuclease. Recognizes the chi site generating a DNA molecule suitable for the initiation of homologous recombination. The AddB subunit has 5' -&gt; 3' nuclease activity but not helicase activity. This Geobacillus thermodenitrificans (strain NG80-2) protein is ATP-dependent helicase/deoxyribonuclease subunit B.